Consider the following 283-residue polypeptide: NAD kinase (283 aa).

Catalysis depends on D73, which acts as the Proton acceptor. NAD(+) is bound by residues 73 to 74 (DG), 146 to 147 (NE), H157, H176, D178, 189 to 194 (TAYNLS), and A213.

It belongs to the NAD kinase family. A divalent metal cation serves as cofactor.

It is found in the cytoplasm. The catalysed reaction is NAD(+) + ATP = ADP + NADP(+) + H(+). In terms of biological role, involved in the regulation of the intracellular balance of NAD and NADP, and is a key enzyme in the biosynthesis of NADP. Catalyzes specifically the phosphorylation on 2'-hydroxyl of the adenosine moiety of NAD to yield NADP. This is NAD kinase from Haloarcula marismortui (strain ATCC 43049 / DSM 3752 / JCM 8966 / VKM B-1809) (Halobacterium marismortui).